Consider the following 239-residue polypeptide: Enolase-phosphatase E1 (239 aa).

The protein belongs to the HAD-like hydrolase superfamily. MasA/MtnC family. Monomer. It depends on Mg(2+) as a cofactor.

The enzyme catalyses 5-methylsulfanyl-2,3-dioxopentyl phosphate + H2O = 1,2-dihydroxy-5-(methylsulfanyl)pent-1-en-3-one + phosphate. Its pathway is amino-acid biosynthesis; L-methionine biosynthesis via salvage pathway; L-methionine from S-methyl-5-thio-alpha-D-ribose 1-phosphate: step 3/6. It participates in amino-acid biosynthesis; L-methionine biosynthesis via salvage pathway; L-methionine from S-methyl-5-thio-alpha-D-ribose 1-phosphate: step 4/6. Its function is as follows. Bifunctional enzyme that catalyzes the enolization of 2,3-diketo-5-methylthiopentyl-1-phosphate (DK-MTP-1-P) into the intermediate 2-hydroxy-3-keto-5-methylthiopentenyl-1-phosphate (HK-MTPenyl-1-P), which is then dephosphorylated to form the acireductone 1,2-dihydroxy-3-keto-5-methylthiopentene (DHK-MTPene). This Streptomyces avermitilis (strain ATCC 31267 / DSM 46492 / JCM 5070 / NBRC 14893 / NCIMB 12804 / NRRL 8165 / MA-4680) protein is Enolase-phosphatase E1.